We begin with the raw amino-acid sequence, 757 residues long: 5-methyltetrahydropteroyltriglutamate--homocysteine methyltransferase (757 aa).

5-methyltetrahydropteroyltri-L-glutamate is bound by residues 17-20 (RELK) and Lys115. L-homocysteine is bound by residues 430–432 (IGS) and Glu483. L-methionine contacts are provided by residues 430–432 (IGS) and Glu483. Residues 514 to 515 (RC) and Trp560 each bind 5-methyltetrahydropteroyltri-L-glutamate. Asp598 provides a ligand contact to L-homocysteine. Asp598 serves as a coordination point for L-methionine. Glu604 provides a ligand contact to 5-methyltetrahydropteroyltri-L-glutamate. Residues His640, Cys642, and Glu664 each coordinate Zn(2+). The active-site Proton donor is the His693. Cys725 provides a ligand contact to Zn(2+).

It belongs to the vitamin-B12 independent methionine synthase family. Zn(2+) is required as a cofactor.

The enzyme catalyses 5-methyltetrahydropteroyltri-L-glutamate + L-homocysteine = tetrahydropteroyltri-L-glutamate + L-methionine. Its pathway is amino-acid biosynthesis; L-methionine biosynthesis via de novo pathway; L-methionine from L-homocysteine (MetE route): step 1/1. Functionally, catalyzes the transfer of a methyl group from 5-methyltetrahydrofolate to homocysteine resulting in methionine formation. This is 5-methyltetrahydropteroyltriglutamate--homocysteine methyltransferase from Buchnera aphidicola subsp. Schizaphis graminum (strain Sg).